A 396-amino-acid polypeptide reads, in one-letter code: Elongation factor Tu (396 aa).

A tr-type G domain is found at 10–206 (KPHVNVGTIG…ALDTYIPLPE (197 aa)). The segment at 19-26 (GHVDHGKT) is G1. 19–26 (GHVDHGKT) serves as a coordination point for GTP. T26 contributes to the Mg(2+) binding site. Residues 60–64 (GITIN) form a G2 region. Positions 81–84 (DCPG) are G3. Residues 81–85 (DCPGH) and 136–139 (NKCD) each bind GTP. Residues 136-139 (NKCD) form a G4 region. The segment at 174 to 176 (SAK) is G5.

The protein belongs to the TRAFAC class translation factor GTPase superfamily. Classic translation factor GTPase family. EF-Tu/EF-1A subfamily. As to quaternary structure, monomer.

Its subcellular location is the cytoplasm. It carries out the reaction GTP + H2O = GDP + phosphate + H(+). Functionally, GTP hydrolase that promotes the GTP-dependent binding of aminoacyl-tRNA to the A-site of ribosomes during protein biosynthesis. The protein is Elongation factor Tu of Polaromonas sp. (strain JS666 / ATCC BAA-500).